The primary structure comprises 1585 residues: uncharacterized protein (1585 aa).

Residues Asp12–Thr59 adopt a coiled-coil conformation. Disordered stretches follow at residues Pro586–Arg627 and Ile645–Arg692. Positions Thr618–Arg627 are enriched in polar residues. Residues Ile645 to Gly655 show a composition bias toward basic residues. Residues Asn661 to Val672 show a composition bias toward polar residues. Phosphoserine is present on residues Ser970 and Ser972.

This sequence to B.subtilis XkdO.

This is an uncharacterized protein from Bacillus subtilis (strain 168).